Here is a 1157-residue protein sequence, read N- to C-terminus: Pesticidal crystal protein Cry9Ca (1157 aa).

Belongs to the delta endotoxin family.

Its function is as follows. Promotes colloidosmotic lysis by binding to the midgut epithelial cells of Lepidoptera larvae. Has a fairly broad spectrum of activity against members of the Pyralidae, Plutellidae, Sphingidae and Noctuidae families. It was the first insecticidal crystal protein characterized with activity against cutworms. No activity is observed against some beetles, such as the Colorado potato beetle. This is Pesticidal crystal protein Cry9Ca (cry9Ca) from Bacillus thuringiensis subsp. tolworthi.